Here is a 294-residue protein sequence, read N- to C-terminus: Large ribosomal subunit protein uL18A (294 aa).

Serine 10 is subject to Phosphoserine. Tyrosine 12 carries the phosphotyrosine modification. Serine 81 is subject to Phosphoserine.

The protein belongs to the universal ribosomal protein uL18 family. As to quaternary structure, component of the large ribosomal subunit (LSU). Mature yeast ribosomes consist of a small (40S) and a large (60S) subunit. The 40S small subunit contains 1 molecule of ribosomal RNA (18S rRNA) and 33 different proteins (encoded by 57 genes). The large 60S subunit contains 3 rRNA molecules (25S, 5.8S and 5S rRNA) and 46 different proteins (encoded by 81 genes). Component of a hexameric 5S RNP precursor complex, composed of 5S RNA, rrs1, rpf2, rpl5a/rpl5b, rpl11a/rpl11b and syo1; this complex acts as a precursor for ribosome assembly. rpl5a/rpl5b/uL18 forms a heterotrimeric complex with syo1 and rpl11a/rpl11b/uL5. Interaction of this complex with KAP104 allows the nuclear import of the heterotrimer.

Its subcellular location is the cytoplasm. It localises to the nucleus. In terms of biological role, component of the ribosome, a large ribonucleoprotein complex responsible for the synthesis of proteins in the cell. The small ribosomal subunit (SSU) binds messenger RNAs (mRNAs) and translates the encoded message by selecting cognate aminoacyl-transfer RNA (tRNA) molecules. The large subunit (LSU) contains the ribosomal catalytic site termed the peptidyl transferase center (PTC), which catalyzes the formation of peptide bonds, thereby polymerizing the amino acids delivered by tRNAs into a polypeptide chain. The nascent polypeptides leave the ribosome through a tunnel in the LSU and interact with protein factors that function in enzymatic processing, targeting, and the membrane insertion of nascent chains at the exit of the ribosomal tunnel. This is Large ribosomal subunit protein uL18A (rpl501) from Schizosaccharomyces pombe (strain 972 / ATCC 24843) (Fission yeast).